Here is a 177-residue protein sequence, read N- to C-terminus: Large ribosomal subunit protein uL6 (177 aa).

Belongs to the universal ribosomal protein uL6 family. As to quaternary structure, part of the 50S ribosomal subunit.

Functionally, this protein binds to the 23S rRNA, and is important in its secondary structure. It is located near the subunit interface in the base of the L7/L12 stalk, and near the tRNA binding site of the peptidyltransferase center. This chain is Large ribosomal subunit protein uL6, found in Novosphingobium aromaticivorans (strain ATCC 700278 / DSM 12444 / CCUG 56034 / CIP 105152 / NBRC 16084 / F199).